A 684-amino-acid chain; its full sequence is U4/U6 small nuclear ribonucleoprotein Prp3 (684 aa).

The 87-residue stretch at 1–87 (MSLSKRELDE…HSKSNSDRNR (87 aa)) folds into the PWI domain. A compositionally biased stretch (basic and acidic residues) spans 73–107 (GRSSRHSKSNSDRNRKRELKDVFGDDSEVSKESSG). Disordered stretches follow at residues 73–109 (GRSS…SGVK) and 162–183 (FISP…RLPI). Residues 170 to 183 (PKISSSSQSERLPI) are compositionally biased toward polar residues.

In terms of assembly, component of the precatalytic spliceosome (spliceosome B complex). Component of the U4/U6-U5 tri-snRNP complex, a building block of the precatalytic spliceosome (spliceosome B complex). The U4/U6-U5 tri-snRNP complex is composed of the U4, U6 and U5 snRNAs and at least PRPF3, PRPF4, PRPF6, PRPF8, PRPF31, SNRNP200, TXNL4A, SNRNP40, SNRPB, SNRPD1, SNRPD2, SNRPD3, SNRPE, SNRPF, SNRPG, DDX23, CD2BP2, PPIH, SNU13, EFTUD2, SART1 and USP39, plus LSM2, LSM3, LSM4, LSM5, LSM6, LSM7 and LSM8.

It is found in the nucleus. Its subcellular location is the nucleus speckle. Plays a role in pre-mRNA splicing as component of the U4/U6-U5 tri-snRNP complex that is involved in spliceosome assembly, and as component of the precatalytic spliceosome (spliceosome B complex). This Gallus gallus (Chicken) protein is U4/U6 small nuclear ribonucleoprotein Prp3 (PRPF3).